Consider the following 132-residue polypeptide: Small ribosomal subunit protein uS9 (132 aa).

It belongs to the universal ribosomal protein uS9 family.

In Mesomycoplasma hyopneumoniae (strain 232) (Mycoplasma hyopneumoniae), this protein is Small ribosomal subunit protein uS9.